Reading from the N-terminus, the 337-residue chain is MVREKVTVSTRTLQWKCVESRTDSKRLYYGRFILSPLMKGQADTIGIAMRRALLGEIEGTCITRVKSEKVPHEYSTITGIQESVHEILMNLKEIILRSNLYGTSDASICVKGPGSVTAQDIILPPYVEIVDNTQHIASLTEPIDFCIGLQIERNRGYLIKTPHNFQDGSYPIDAVFMPVRNANHSIHSYGNGNEKQEILFLEIWTNGSLTPKEALHEASRNLIDLFIPFLHMEEDNLYLQDNQHTVPLSPFTFHDKLAKLIKNKKKIALKSIFIDQSELPSRIYNCLKMSNIYTLLDLLNNSQEDLMKIEHFRSEDVKRILGILEKYFVIDLAKNKF.

Residues 1 to 233 (MVREKVTVST…DLFIPFLHME (233 aa)) form an alpha N-terminal domain (alpha-NTD) region. An alpha C-terminal domain (alpha-CTD) region spans residues 265-337 (KKIALKSIFI…FVIDLAKNKF (73 aa)).

This sequence belongs to the RNA polymerase alpha chain family. As to quaternary structure, in plastids the minimal PEP RNA polymerase catalytic core is composed of four subunits: alpha, beta, beta', and beta''. When a (nuclear-encoded) sigma factor is associated with the core the holoenzyme is formed, which can initiate transcription.

Its subcellular location is the plastid. It is found in the chloroplast. The enzyme catalyses RNA(n) + a ribonucleoside 5'-triphosphate = RNA(n+1) + diphosphate. In terms of biological role, DNA-dependent RNA polymerase catalyzes the transcription of DNA into RNA using the four ribonucleoside triphosphates as substrates. In Nicotiana sylvestris (Wood tobacco), this protein is DNA-directed RNA polymerase subunit alpha.